A 1273-amino-acid chain; its full sequence is Inverted formin-2 (1273 aa).

5 disordered regions span residues 1–30 (MSVK…EANL), 346–387 (GRPR…GQQP), 427–559 (LSSS…PLPG), 960–999 (NKDR…GPGK), and 1021–1273 (KTAR…CVIQ). Serine 2 bears the N-acetylserine mark. In terms of domain architecture, GBD/FH3 spans 2 to 330 (SVKEGAQRKW…RAVLLASDAQ (329 aa)). Position 351 is a phosphoserine (serine 351). Residues 359–382 (SVQTNSVQNQGSSSQNTTTPTTKV) are compositionally biased toward low complexity. The FH1 domain maps to 421-564 (PLPTPPLSSS…PPLPGFSVPS (144 aa)). Composition is skewed to pro residues over residues 433-516 (VLPP…PLPS) and 524-558 (QPPP…PPLP). Residues 589-979 (HRRVNPPTLR…AERRKQQLAE (391 aa)) enclose the FH2 domain. Residues 907 to 984 (EASQELDKVF…QQLAEEEARR (78 aa)) are a coiled coil. One can recognise a WH2 domain in the interval 1007–1022 (DALLADIRKGFQLRKT). The segment covering 1047–1059 (ATASNPTQGTNHP) has biased composition (polar residues). The span at 1088–1101 (SKEEDGPPALERRS) shows a compositional bias: basic and acidic residues. Residues serine 1172 and serine 1174 each carry the phosphoserine modification. The span at 1195-1204 (GEDEDGEDTA) shows a compositional bias: acidic residues. Threonine 1203 bears the Phosphothreonine mark. A phosphoserine mark is found at serine 1216 and serine 1218. A phosphothreonine mark is found at threonine 1223 and threonine 1230. Residues 1242–1251 (TSKRRKKRPS) are compositionally biased toward basic residues.

It belongs to the formin homology family. Interacts with profilin and actin at the FH1 and FH2 domains respectively. Interacts with DAAM2.

It is found in the cytoplasm. Its subcellular location is the perinuclear region. With respect to regulation, phosphate inhibits both the depolymerization and severing activities. In terms of biological role, severs actin filaments and accelerates their polymerization and depolymerization. In Mus musculus (Mouse), this protein is Inverted formin-2 (Inf2).